Here is a 474-residue protein sequence, read N- to C-terminus: Cyclin-dependent kinase 2 homolog (474 aa).

Residues 7 to 446 (YRHVVKLGEG…AAEAVHHPYL (440 aa)) enclose the Protein kinase domain. Residues 13-21 (LGEGTYGMV) and lysine 36 each bind ATP. Position 17 is a phosphothreonine (threonine 17). Tyrosine 18 carries the post-translational modification Phosphotyrosine. The active-site Proton acceptor is the aspartate 131. The disordered stretch occupies residues 150-200 (TALPSSPQQSMRVPHAGGTNGEAGRASANGNEHAPRPTAAEGSVSPWEEAA). Serine 230 is modified (phosphoserine). Over residues 334 to 354 (QQLQAQQQQPQQGSSPSHSSS) the composition is skewed to low complexity. Positions 334-356 (QQLQAQQQQPQQGSSPSHSSSRA) are disordered.

The protein belongs to the protein kinase superfamily. CMGC Ser/Thr protein kinase family. CDC2/CDKX subfamily. In terms of assembly, may form a complex composed of at least the catalytic subunit CRK2 and a cyclin. Requires Mg(2+) as cofactor.

The protein localises to the cytoplasm. The enzyme catalyses L-seryl-[protein] + ATP = O-phospho-L-seryl-[protein] + ADP + H(+). It carries out the reaction L-threonyl-[protein] + ATP = O-phospho-L-threonyl-[protein] + ADP + H(+). It catalyses the reaction [DNA-directed RNA polymerase] + ATP = phospho-[DNA-directed RNA polymerase] + ADP + H(+). Phosphorylation at Thr-17 or Tyr-18 inactivates the enzyme, while phosphorylation at Ser-230 activates it. In terms of biological role, serine/threonine-protein kinase. Involved in the control of the cell cycle. Required for entry into S-phase and mitosis. Probable component of the kinase complex that phosphorylates the repetitive C-terminus of RNA polymerase II. The protein is Cyclin-dependent kinase 2 homolog of Crithidia fasciculata.